Here is a 629-residue protein sequence, read N- to C-terminus: tRNA uridine 5-carboxymethylaminomethyl modification enzyme MnmG (629 aa).

FAD is bound by residues 13–18, valine 125, and serine 180; that span reads GGGHAG. Residue 273-287 coordinates NAD(+); sequence GPRYCPSIEDKVMRF. Residue glutamine 370 coordinates FAD.

The protein belongs to the MnmG family. In terms of assembly, homodimer. Heterotetramer of two MnmE and two MnmG subunits. The cofactor is FAD.

Its subcellular location is the cytoplasm. Its function is as follows. NAD-binding protein involved in the addition of a carboxymethylaminomethyl (cmnm) group at the wobble position (U34) of certain tRNAs, forming tRNA-cmnm(5)s(2)U34. The polypeptide is tRNA uridine 5-carboxymethylaminomethyl modification enzyme MnmG (Salmonella typhi).